The primary structure comprises 88 residues: Small ribosomal subunit protein bS16 (88 aa).

Belongs to the bacterial ribosomal protein bS16 family.

The polypeptide is Small ribosomal subunit protein bS16 (Desulfitobacterium hafniense (strain DSM 10664 / DCB-2)).